We begin with the raw amino-acid sequence, 314 residues long: tRNA dimethylallyltransferase (314 aa).

12-19 is a binding site for ATP; that stretch reads GPTGTGKS. Position 14 to 19 (14 to 19) interacts with substrate; the sequence is TGTGKS.

This sequence belongs to the IPP transferase family. As to quaternary structure, monomer. The cofactor is Mg(2+).

The enzyme catalyses adenosine(37) in tRNA + dimethylallyl diphosphate = N(6)-dimethylallyladenosine(37) in tRNA + diphosphate. Catalyzes the transfer of a dimethylallyl group onto the adenine at position 37 in tRNAs that read codons beginning with uridine, leading to the formation of N6-(dimethylallyl)adenosine (i(6)A). The sequence is that of tRNA dimethylallyltransferase from Mycolicibacterium paratuberculosis (strain ATCC BAA-968 / K-10) (Mycobacterium paratuberculosis).